A 264-amino-acid polypeptide reads, in one-letter code: Hydroxyethylthiazole kinase (264 aa).

Met52 is a substrate binding site. Positions 127 and 173 each coordinate ATP. Gly200 serves as a coordination point for substrate.

It belongs to the Thz kinase family. It depends on Mg(2+) as a cofactor.

The enzyme catalyses 5-(2-hydroxyethyl)-4-methylthiazole + ATP = 4-methyl-5-(2-phosphooxyethyl)-thiazole + ADP + H(+). It functions in the pathway cofactor biosynthesis; thiamine diphosphate biosynthesis; 4-methyl-5-(2-phosphoethyl)-thiazole from 5-(2-hydroxyethyl)-4-methylthiazole: step 1/1. Catalyzes the phosphorylation of the hydroxyl group of 4-methyl-5-beta-hydroxyethylthiazole (THZ). The polypeptide is Hydroxyethylthiazole kinase (Pectobacterium atrosepticum (strain SCRI 1043 / ATCC BAA-672) (Erwinia carotovora subsp. atroseptica)).